A 294-amino-acid polypeptide reads, in one-letter code: Acetylglutamate kinase (294 aa).

Residues 69 to 70 (GG), Arg91, and Asn190 each bind substrate.

This sequence belongs to the acetylglutamate kinase family. ArgB subfamily.

It is found in the cytoplasm. The enzyme catalyses N-acetyl-L-glutamate + ATP = N-acetyl-L-glutamyl 5-phosphate + ADP. Its pathway is amino-acid biosynthesis; L-arginine biosynthesis; N(2)-acetyl-L-ornithine from L-glutamate: step 2/4. Its function is as follows. Catalyzes the ATP-dependent phosphorylation of N-acetyl-L-glutamate. The chain is Acetylglutamate kinase from Mycobacterium bovis (strain ATCC BAA-935 / AF2122/97).